The following is a 220-amino-acid chain: Riboflavin kinase (220 aa).

The segment at 1-92 is H-T-H motif-like; sequence MDTSDQYYRA…LSRILSIKSN (92 aa). A riboflavin kinase region spans residues 93 to 220; sequence IVMTGIVVPG…GDEVTIEVTA (128 aa). Residue 102 to 107 participates in CDP binding; that stretch reads GMGEGK. Mg(2+) is bound by residues T131 and N133. Positions 188 and 195 each coordinate FMN. Residue 200-203 participates in CDP binding; the sequence is KYLR.

This sequence belongs to the archaeal riboflavin kinase family. Requires Mg(2+) as cofactor.

The enzyme catalyses riboflavin + CTP = CDP + FMN + H(+). It participates in cofactor biosynthesis; FMN biosynthesis; FMN from riboflavin (CTP route): step 1/1. Functionally, catalyzes the CTP-dependent phosphorylation of riboflavin (vitamin B2) to form flavin mononucleotide (FMN). In Thermoplasma volcanium (strain ATCC 51530 / DSM 4299 / JCM 9571 / NBRC 15438 / GSS1), this protein is Riboflavin kinase (ribK).